The primary structure comprises 178 residues: Ribosome maturation factor RimM (178 aa).

Positions 101-178 constitute a PRC barrel domain; it reads EGEFYWYQLQ…EMRVDWDADF (78 aa).

It belongs to the RimM family. Binds ribosomal protein uS19.

It localises to the cytoplasm. In terms of biological role, an accessory protein needed during the final step in the assembly of 30S ribosomal subunit, possibly for assembly of the head region. Essential for efficient processing of 16S rRNA. May be needed both before and after RbfA during the maturation of 16S rRNA. It has affinity for free ribosomal 30S subunits but not for 70S ribosomes. This chain is Ribosome maturation factor RimM, found in Ectopseudomonas mendocina (strain ymp) (Pseudomonas mendocina).